The sequence spans 694 residues: Elongation factor G (694 aa).

A tr-type G domain is found at 6 to 288; sequence KLYRNIGIAA…GVIEYLPSPT (283 aa). GTP-binding positions include 15–22, 86–90, and 140–143; these read AHVDAGKT, DTPGH, and NKMD.

It belongs to the TRAFAC class translation factor GTPase superfamily. Classic translation factor GTPase family. EF-G/EF-2 subfamily.

It is found in the cytoplasm. In terms of biological role, catalyzes the GTP-dependent ribosomal translocation step during translation elongation. During this step, the ribosome changes from the pre-translocational (PRE) to the post-translocational (POST) state as the newly formed A-site-bound peptidyl-tRNA and P-site-bound deacylated tRNA move to the P and E sites, respectively. Catalyzes the coordinated movement of the two tRNA molecules, the mRNA and conformational changes in the ribosome. The polypeptide is Elongation factor G (Legionella pneumophila (strain Lens)).